A 664-amino-acid chain; its full sequence is Phosphomethylpyrimidine synthase (664 aa).

Substrate-binding positions include N235, M264, Y293, H329, 349-351 (SRG), 390-393 (DGMR), and E429. H433 serves as a coordination point for Zn(2+). Position 456 (Y456) interacts with substrate. Position 497 (H497) interacts with Zn(2+). 3 residues coordinate [4Fe-4S] cluster: C577, C580, and C585.

The protein belongs to the ThiC family. Homodimer. It depends on [4Fe-4S] cluster as a cofactor.

It catalyses the reaction 5-amino-1-(5-phospho-beta-D-ribosyl)imidazole + S-adenosyl-L-methionine = 4-amino-2-methyl-5-(phosphooxymethyl)pyrimidine + CO + 5'-deoxyadenosine + formate + L-methionine + 3 H(+). Its pathway is cofactor biosynthesis; thiamine diphosphate biosynthesis. In terms of biological role, catalyzes the synthesis of the hydroxymethylpyrimidine phosphate (HMP-P) moiety of thiamine from aminoimidazole ribotide (AIR) in a radical S-adenosyl-L-methionine (SAM)-dependent reaction. This is Phosphomethylpyrimidine synthase from Shewanella amazonensis (strain ATCC BAA-1098 / SB2B).